The chain runs to 65 residues: Large ribosomal subunit protein bL31 (65 aa).

Zn(2+) contacts are provided by Cys-16, Cys-18, Cys-36, and Cys-39.

It belongs to the bacterial ribosomal protein bL31 family. Type A subfamily. As to quaternary structure, part of the 50S ribosomal subunit. It depends on Zn(2+) as a cofactor.

Binds the 23S rRNA. The chain is Large ribosomal subunit protein bL31 from Geobacter sulfurreducens (strain ATCC 51573 / DSM 12127 / PCA).